The primary structure comprises 391 residues: Na(+)/H(+) antiporter NhaA (391 aa).

Helical transmembrane passes span 9–29 (FQLE…ALII), 36–56 (YLYS…LNIA), 59–79 (LLLW…GLEV), 95–115 (ILPA…YWFI), 123–143 (VAGW…VLAL), 154–174 (LFLM…IALF), 177–197 (GTLS…LIAM), 213–235 (LILW…ALAL), 259–279 (WVAY…SLAG), 293–313 (IAVG…WLAV), 329–349 (ILGV…VGSL), and 364–384 (MGIL…TAMA).

This sequence belongs to the NhaA Na(+)/H(+) (TC 2.A.33) antiporter family.

The protein localises to the cell inner membrane. It carries out the reaction Na(+)(in) + 2 H(+)(out) = Na(+)(out) + 2 H(+)(in). In terms of biological role, na(+)/H(+) antiporter that extrudes sodium in exchange for external protons. The sequence is that of Na(+)/H(+) antiporter NhaA from Pseudomonas putida (strain GB-1).